A 562-amino-acid chain; its full sequence is NAD-dependent malic enzyme (562 aa).

The Proton donor role is filled by Tyr-101. Arg-154 is a binding site for NAD(+). The Proton acceptor role is filled by Lys-172. A divalent metal cation is bound by residues Glu-243, Asp-244, and Asp-267. The NAD(+) site is built by Asp-267 and Asn-415.

Belongs to the malic enzymes family. Homotetramer. It depends on Mg(2+) as a cofactor. Mn(2+) serves as cofactor.

It carries out the reaction (S)-malate + NAD(+) = pyruvate + CO2 + NADH. It catalyses the reaction oxaloacetate + H(+) = pyruvate + CO2. The polypeptide is NAD-dependent malic enzyme (Idiomarina loihiensis (strain ATCC BAA-735 / DSM 15497 / L2-TR)).